The chain runs to 344 residues: tRNA N6-adenosine threonylcarbamoyltransferase (344 aa).

Fe cation-binding residues include histidine 115 and histidine 119. Substrate-binding positions include 137–141 (LVSGG), aspartate 170, glycine 183, aspartate 187, and asparagine 276. Residue aspartate 306 coordinates Fe cation.

It belongs to the KAE1 / TsaD family. The cofactor is Fe(2+).

The protein resides in the cytoplasm. The enzyme catalyses L-threonylcarbamoyladenylate + adenosine(37) in tRNA = N(6)-L-threonylcarbamoyladenosine(37) in tRNA + AMP + H(+). Its function is as follows. Required for the formation of a threonylcarbamoyl group on adenosine at position 37 (t(6)A37) in tRNAs that read codons beginning with adenine. Is involved in the transfer of the threonylcarbamoyl moiety of threonylcarbamoyl-AMP (TC-AMP) to the N6 group of A37, together with TsaE and TsaB. TsaD likely plays a direct catalytic role in this reaction. This Limosilactobacillus fermentum (strain NBRC 3956 / LMG 18251) (Lactobacillus fermentum) protein is tRNA N6-adenosine threonylcarbamoyltransferase.